We begin with the raw amino-acid sequence, 485 residues long: UDP-N-acetylmuramate--L-alanine ligase (485 aa).

Position 120-126 (120-126 (GSHGKTT)) interacts with ATP.

The protein belongs to the MurCDEF family.

It localises to the cytoplasm. The enzyme catalyses UDP-N-acetyl-alpha-D-muramate + L-alanine + ATP = UDP-N-acetyl-alpha-D-muramoyl-L-alanine + ADP + phosphate + H(+). Its pathway is cell wall biogenesis; peptidoglycan biosynthesis. Functionally, cell wall formation. This is UDP-N-acetylmuramate--L-alanine ligase from Rickettsia peacockii (strain Rustic).